The primary structure comprises 102 residues: Nucleoid-associated protein WIGBR5260 (102 aa).

The protein belongs to the YbaB/EbfC family. Homodimer.

The protein resides in the cytoplasm. It localises to the nucleoid. Its function is as follows. Binds to DNA and alters its conformation. May be involved in regulation of gene expression, nucleoid organization and DNA protection. The polypeptide is Nucleoid-associated protein WIGBR5260 (Wigglesworthia glossinidia brevipalpis).